The following is a 263-amino-acid chain: Hydroxyethylthiazole kinase (263 aa).

Met-39 is a binding site for substrate. 2 residues coordinate ATP: Lys-115 and Thr-160. Gly-187 contributes to the substrate binding site.

The protein belongs to the Thz kinase family. Mg(2+) serves as cofactor.

The enzyme catalyses 5-(2-hydroxyethyl)-4-methylthiazole + ATP = 4-methyl-5-(2-phosphooxyethyl)-thiazole + ADP + H(+). The protein operates within cofactor biosynthesis; thiamine diphosphate biosynthesis; 4-methyl-5-(2-phosphoethyl)-thiazole from 5-(2-hydroxyethyl)-4-methylthiazole: step 1/1. Catalyzes the phosphorylation of the hydroxyl group of 4-methyl-5-beta-hydroxyethylthiazole (THZ). The sequence is that of Hydroxyethylthiazole kinase from Staphylococcus haemolyticus (strain JCSC1435).